Here is a 101-residue protein sequence, read N- to C-terminus: Interleukin-8 (101 aa).

A signal peptide spans 1-22; that stretch reads MNSKLAVALLATFLLSLTLCEA. A Citrulline modification is found at arginine 27. Intrachain disulfides connect cysteine 34/cysteine 61 and cysteine 36/cysteine 77.

The protein belongs to the intercrine alpha (chemokine CxC) family. As to quaternary structure, homodimer. Interacts with TNFAIP6 (via Link domain); this interaction interferes with chemokine binding to glycosaminoglycans. Citrullination at Arg-27 prevents proteolysis, and dampens tissue inflammation, it also enhances leukocytosis, possibly through impaired chemokine clearance from the blood circulation.

The protein resides in the secreted. Chemotactic factor that mediates inflammatory response by attracting neutrophils, basophils, and T-cells to clear pathogens and protect the host from infection. Also plays an important role in neutrophil activation. Released in response to an inflammatory stimulus, exerts its effect by binding to the G-protein-coupled receptors CXCR1 and CXCR2, primarily found in neutrophils, monocytes and endothelial cells. G-protein heterotrimer (alpha, beta, gamma subunits) constitutively binds to CXCR1/CXCR2 receptor and activation by IL8 leads to beta and gamma subunits release from Galpha (GNAI2 in neutrophils) and activation of several downstream signaling pathways including PI3K and MAPK pathways. The protein is Interleukin-8 (CXCL8) of Oryctolagus cuniculus (Rabbit).